Reading from the N-terminus, the 959-residue chain is Protein NLP7 (959 aa).

The interval 1 to 22 is disordered; that stretch reads MCEPDDNSARNGVTTQPSRSRE. Positions 9 to 18 are enriched in polar residues; sequence ARNGVTTQPS. The region spanning 578–659 is the RWP-RK domain; the sequence is KKKTEKKRGK…IESVQGTDGG (82 aa). Residues 633–654 adopt a coiled-coil conformation; that stretch reads SRKIKKVNRSITKLKRVIESVQ. Composition is skewed to polar residues over residues 673 to 687, 694 to 703, and 735 to 745; these read THGQ…SPNG, PNTNNSPNHW, and GTPTSHGSCDG. A disordered region spans residues 673-760; that stretch reads THGQTSAQPL…PKVPNQDPLF (88 aa). Positions 863 to 945 constitute a PB1 domain; that stretch reads TVTIKASYKD…KIVRLLVHDV (83 aa).

As to quaternary structure, interacts with NRG2. As to expression, expressed in roots, stems, leaves, flowers and siliques. Detected in root hairs, emerging secondary roots, vascular tissues, leaf parenchyma cells and stomata.

The protein localises to the nucleus. In terms of biological role, transcription factor involved in regulation of nitrate assimilation and in transduction of the nitrate signal. The chain is Protein NLP7 (NLP7) from Arabidopsis thaliana (Mouse-ear cress).